Consider the following 1178-residue polypeptide: Pyruvate carboxylase, mitochondrial (1178 aa).

The transit peptide at 1-20 (MLKFRTVHGGLRLLGIRRTS) directs the protein to the mitochondrion. N6-acetyllysine occurs at positions 35 and 39. Positions 36–486 (PIKKVMVANR…DTQFIDENPE (451 aa)) constitute a Biotin carboxylation domain. An N6-acetyllysine; alternate modification is found at K79. K79 is subject to N6-succinyllysine; alternate. 2 positions are modified to N6-acetyllysine: K148 and K152. ATP contacts are provided by K152 and E236. One can recognise an ATP-grasp domain in the interval 156-353 (RAIAIAAGVP…LVHAQIHVAE (198 aa)). K241 is modified (N6-acetyllysine). ATP is bound at residue H271. N6-acetyllysine occurs at positions 297 and 319. R328 is a catalytic residue. N6-acetyllysine is present on K434. Position 442 is an N6-succinyllysine (K442). Residues 563–832 (LLLMDTTFRD…DTEVPMERVF (270 aa)) form the Pyruvate carboxyltransferase domain. 571–575 (RDAHQ) contributes to the substrate binding site. D572 is a Mn(2+) binding site. Position 589 is an N6-acetyllysine (K589). Residue R644 participates in substrate binding. N6-acetyllysine occurs at positions 661 and 717. Residue K741 coordinates Mn(2+). At K741 the chain carries N6-carboxylysine. K748 carries the post-translational modification N6-acetyllysine. Mn(2+)-binding residues include H771 and H773. At K892 the chain carries N6-acetyllysine. T908 provides a ligand contact to substrate. 2 positions are modified to N6-acetyllysine: K969 and K992. T1003 bears the Phosphothreonine mark. An N6-acetyllysine mark is found at K1061, K1090, and K1124. The region spanning 1109 to 1178 (KGQIGAPMPG…EGDDLILEIE (70 aa)) is the Biotinyl-binding domain. K1144 bears the N6-biotinyllysine mark.

Homotetramer. Interacts (via the biotin carboxylation domain) with SIRT4. Biotin is required as a cofactor. It depends on Mn(2+) as a cofactor. Acetylation of Lys-748 might play a role in catalytic activity regulation.

It localises to the mitochondrion matrix. The enzyme catalyses hydrogencarbonate + pyruvate + ATP = oxaloacetate + ADP + phosphate + H(+). It participates in carbohydrate biosynthesis; gluconeogenesis. Pyruvate carboxylase catalyzes a 2-step reaction, involving the ATP-dependent carboxylation of the covalently attached biotin in the first step and the transfer of the carboxyl group to pyruvate in the second. Catalyzes in a tissue specific manner, the initial reactions of glucose (liver, kidney) and lipid (adipose tissue, liver, brain) synthesis from pyruvate. In Homo sapiens (Human), this protein is Pyruvate carboxylase, mitochondrial.